The following is a 196-amino-acid chain: Holliday junction branch migration complex subunit RuvA (196 aa).

The segment at 1–63 is domain I; sequence MISFVSGRVA…EDSLTLYGFA (63 aa). Residues 64–136 form a domain II region; sequence DDDERTVFEL…LKDRLGTPST (73 aa). A flexible linker region spans residues 136–140; the sequence is TAAAE. Positions 141–196 are domain III; that stretch reads STSGWRDAVHAGLLNLGYTARQADEAIAAIAGELDDSAAVDTATALRLALATLKRP.

Belongs to the RuvA family. As to quaternary structure, homotetramer. Forms an RuvA(8)-RuvB(12)-Holliday junction (HJ) complex. HJ DNA is sandwiched between 2 RuvA tetramers; dsDNA enters through RuvA and exits via RuvB. An RuvB hexamer assembles on each DNA strand where it exits the tetramer. Each RuvB hexamer is contacted by two RuvA subunits (via domain III) on 2 adjacent RuvB subunits; this complex drives branch migration. In the full resolvosome a probable DNA-RuvA(4)-RuvB(12)-RuvC(2) complex forms which resolves the HJ.

It localises to the cytoplasm. In terms of biological role, the RuvA-RuvB-RuvC complex processes Holliday junction (HJ) DNA during genetic recombination and DNA repair, while the RuvA-RuvB complex plays an important role in the rescue of blocked DNA replication forks via replication fork reversal (RFR). RuvA specifically binds to HJ cruciform DNA, conferring on it an open structure. The RuvB hexamer acts as an ATP-dependent pump, pulling dsDNA into and through the RuvAB complex. HJ branch migration allows RuvC to scan DNA until it finds its consensus sequence, where it cleaves and resolves the cruciform DNA. This chain is Holliday junction branch migration complex subunit RuvA, found in Acidothermus cellulolyticus (strain ATCC 43068 / DSM 8971 / 11B).